Here is a 462-residue protein sequence, read N- to C-terminus: Cysteine--tRNA ligase (462 aa).

Zn(2+) is bound at residue cysteine 28. The 'HIGH' region motif lies at 30 to 40 (VTIYDLCHIGH). Residues cysteine 211, histidine 236, and glutamate 240 each contribute to the Zn(2+) site. The short motif at 268-272 (KMSKS) is the 'KMSKS' region element. Lysine 271 contributes to the ATP binding site.

It belongs to the class-I aminoacyl-tRNA synthetase family. In terms of assembly, monomer. Zn(2+) serves as cofactor.

It is found in the cytoplasm. The enzyme catalyses tRNA(Cys) + L-cysteine + ATP = L-cysteinyl-tRNA(Cys) + AMP + diphosphate. This is Cysteine--tRNA ligase from Aliivibrio salmonicida (strain LFI1238) (Vibrio salmonicida (strain LFI1238)).